The primary structure comprises 195 residues: Cysteine/O-acetylserine efflux protein (195 aa).

Residues 1-9 (MTPMLLSAF) are Periplasmic-facing. A helical membrane pass occupies residues 10-32 (WTYTLITALTPGPNNILALSAAT). Over 33-46 (AHGFRQSIRVLAGM) the chain is Cytoplasmic. A helical transmembrane segment spans residues 47 to 67 (SLGFLVVMLLCAGIAFSLAVI). At 68 to 69 (DP) the chain is on the periplasmic side. Residues 70–90 (AIIHLLSWVGAAYILWLAWKI) form a helical membrane-spanning segment. At 91 to 104 (ATSPAADENARPKP) the chain is on the cytoplasmic side. The helical transmembrane segment at 105 to 125 (VGFWVSFGLQFVNVKIILYGI) threads the bilayer. Residues 126 to 141 (TALSTFVLPQTQALNW) lie on the Periplasmic side of the membrane. The helical transmembrane segment at 142 to 162 (VIGVSILLALIGTFGNVCWAL) threads the bilayer. At 163-176 (AGHLFQRAFRHYGR) the chain is on the cytoplasmic side. A helical membrane pass occupies residues 177 to 194 (QLNIILALLLVYCAVRIF). Residue Y195 is a topological domain, periplasmic.

The protein belongs to the Rht family.

The protein localises to the cell inner membrane. The catalysed reaction is O-acetyl-L-serine(in) = O-acetyl-L-serine(out). The enzyme catalyses L-cysteine(in) = L-cysteine(out). Its function is as follows. Exporter of O-acetylserine (OAS) and cysteine. This chain is Cysteine/O-acetylserine efflux protein (eamB), found in Salmonella choleraesuis (strain SC-B67).